The sequence spans 458 residues: Estrogen-related receptor gamma (458 aa).

A Glycyl lysine isopeptide (Lys-Gly) (interchain with G-Cter in SUMO) cross-link involves residue K40. Positions 42-52 (EPSSPASLTDS) are enriched in polar residues. The interval 42–85 (EPSSPASLTDSVNHHSPGGSSDASGSYSSTMNGHQNGLDSPPLY) is disordered. S45 is subject to Phosphoserine. Positions 57–70 (SPGGSSDASGSYSS) are enriched in low complexity. Positions 125–200 (KRLCLVCGDI…VGMLKEGVRL (76 aa)) form a DNA-binding region, nuclear receptor. NR C4-type zinc fingers lie at residues 128–148 (CLVC…CEAC) and 164–188 (CPAT…FMKC). Residues 233 to 457 (PYNKIVSHLL…KLFLEMLEAK (225 aa)) form the NR LBD domain.

Belongs to the nuclear hormone receptor family. NR3 subfamily. In terms of assembly, homodimer. Binds TLE1, PNRC1 and PNRC2. Binds GRIP1. Interacts with NRIP1, NCOA1 and NCOR2. Post-translationally, acetylated by PCAF/KAT2 (in vitro). In terms of processing, sumoylation on Lys-40 is enhanced by phosphorylation at Ser-45 and represses transcriptional activity. Phosphorylation on Ser-45 enhances sumoylation on Lys-40 thus repressing transcriptional activity. Expressed in the heart, kidney, brain, lung, bone marrow, adrenal gland, trachea, spinal cord and thyroid gland.

It is found in the nucleus. Orphan receptor that acts as a transcription activator in the absence of bound ligand. Binds specifically to an estrogen response element and activates reporter genes controlled by estrogen response elements. Induces the expression of PERM1 in the skeletal muscle. The polypeptide is Estrogen-related receptor gamma (ESRRG) (Homo sapiens (Human)).